The chain runs to 890 residues: Alanine--tRNA ligase (890 aa).

Positions 567, 571, 680, and 684 each coordinate Zn(2+).

Belongs to the class-II aminoacyl-tRNA synthetase family. Zn(2+) is required as a cofactor.

The protein localises to the cytoplasm. It carries out the reaction tRNA(Ala) + L-alanine + ATP = L-alanyl-tRNA(Ala) + AMP + diphosphate. Functionally, catalyzes the attachment of alanine to tRNA(Ala) in a two-step reaction: alanine is first activated by ATP to form Ala-AMP and then transferred to the acceptor end of tRNA(Ala). Also edits incorrectly charged Ser-tRNA(Ala) and Gly-tRNA(Ala) via its editing domain. This Ruegeria pomeroyi (strain ATCC 700808 / DSM 15171 / DSS-3) (Silicibacter pomeroyi) protein is Alanine--tRNA ligase.